A 320-amino-acid chain; its full sequence is Nicotianamine synthase 3 (320 aa).

Belongs to the nicotianamine synthase (NAS)-like family. In shoots.

It carries out the reaction 3 S-adenosyl-L-methionine = nicotianamine + 3 S-methyl-5'-thioadenosine + 3 H(+). In terms of biological role, synthesizes nicotianamine, a polyamine which serves as a sensor for the physiological iron status within the plant, and/or might be involved in the transport of iron. The chain is Nicotianamine synthase 3 (NAS3) from Arabidopsis thaliana (Mouse-ear cress).